The sequence spans 245 residues: Orotidine 5'-phosphate decarboxylase (245 aa).

Substrate-binding positions include aspartate 22, lysine 44, 71 to 80, threonine 131, arginine 192, glutamine 201, glycine 221, and arginine 222; that span reads DLKFHDIPNT. The Proton donor role is filled by lysine 73.

The protein belongs to the OMP decarboxylase family. Type 1 subfamily. In terms of assembly, homodimer.

It catalyses the reaction orotidine 5'-phosphate + H(+) = UMP + CO2. The protein operates within pyrimidine metabolism; UMP biosynthesis via de novo pathway; UMP from orotate: step 2/2. Functionally, catalyzes the decarboxylation of orotidine 5'-monophosphate (OMP) to uridine 5'-monophosphate (UMP). In Escherichia coli O139:H28 (strain E24377A / ETEC), this protein is Orotidine 5'-phosphate decarboxylase.